The following is a 583-amino-acid chain: Phosphoglucomutase, cytoplasmic (583 aa).

A disordered region spans residues methionine 1–glycine 20. Residues arginine 25 and serine 124 each contribute to the alpha-D-glucose 1,6-bisphosphate site. The active-site Phosphoserine intermediate is serine 124. Residues serine 124, aspartate 300, aspartate 302, and aspartate 304 each contribute to the Mg(2+) site. The residue at position 124 (serine 124) is a Phosphoserine. 6 residues coordinate alpha-D-glucose 1,6-bisphosphate: aspartate 304, arginine 305, threonine 368, glutamate 387, serine 389, and lysine 400.

The protein belongs to the phosphohexose mutase family. In terms of assembly, monomer. The cofactor is Mg(2+).

It localises to the cytoplasm. The catalysed reaction is alpha-D-glucose 1-phosphate = alpha-D-glucose 6-phosphate. The enzyme catalyses O-phospho-L-seryl-[protein] + alpha-D-glucose 1-phosphate = alpha-D-glucose 1,6-bisphosphate + L-seryl-[protein]. It carries out the reaction alpha-D-glucose 1,6-bisphosphate + L-seryl-[protein] = O-phospho-L-seryl-[protein] + alpha-D-glucose 6-phosphate. Functionally, catalyzes the reversible isomerization of alpha-D-glucose 1-phosphate to alpha-D-glucose 6-phosphate. The mechanism proceeds via the intermediate compound alpha-D-glucose 1,6-bisphosphate. This enzyme participates in both the breakdown and synthesis of glucose. The chain is Phosphoglucomutase, cytoplasmic (PGM1) from Solanum tuberosum (Potato).